Consider the following 236-residue polypeptide: 2,3,4,5-tetrahydropyridine-2,6-dicarboxylate N-acetyltransferase (236 aa).

This sequence belongs to the transferase hexapeptide repeat family. DapH subfamily.

It carries out the reaction (S)-2,3,4,5-tetrahydrodipicolinate + acetyl-CoA + H2O = L-2-acetamido-6-oxoheptanedioate + CoA. The protein operates within amino-acid biosynthesis; L-lysine biosynthesis via DAP pathway; LL-2,6-diaminopimelate from (S)-tetrahydrodipicolinate (acetylase route): step 1/3. Its function is as follows. Catalyzes the transfer of an acetyl group from acetyl-CoA to tetrahydrodipicolinate. The protein is 2,3,4,5-tetrahydropyridine-2,6-dicarboxylate N-acetyltransferase of Clostridium botulinum (strain ATCC 19397 / Type A).